A 131-amino-acid chain; its full sequence is Large ribosomal subunit protein bL17 (131 aa).

It belongs to the bacterial ribosomal protein bL17 family. In terms of assembly, part of the 50S ribosomal subunit. Contacts protein L32.

In Shewanella baltica (strain OS223), this protein is Large ribosomal subunit protein bL17.